A 539-amino-acid polypeptide reads, in one-letter code: Peptide chain release factor 3 (539 aa).

The region spanning 14–283 (EKRRNFAIIS…AFLEYALQPE (270 aa)) is the tr-type G domain. Residues 23-30 (SHPDAGKT), 91-95 (DTPGH), and 145-148 (NKLD) contribute to the GTP site.

It belongs to the TRAFAC class translation factor GTPase superfamily. Classic translation factor GTPase family. PrfC subfamily.

It localises to the cytoplasm. Its function is as follows. Increases the formation of ribosomal termination complexes and stimulates activities of RF-1 and RF-2. It binds guanine nucleotides and has strong preference for UGA stop codons. It may interact directly with the ribosome. The stimulation of RF-1 and RF-2 is significantly reduced by GTP and GDP, but not by GMP. The polypeptide is Peptide chain release factor 3 (Rippkaea orientalis (strain PCC 8801 / RF-1) (Cyanothece sp. (strain PCC 8801))).